The primary structure comprises 1454 residues: Alpha-2-macroglobulin-like protein 1 (1454 aa).

Positions 1–17 (MWAQLLLGMLALSPAIA) are cleaved as a signal peptide. Residues Cys-40 and Cys-78 are joined by a disulfide bond. Residue Asn-120 is glycosylated (N-linked (GlcNAc...) asparagine). Disulfide bonds link Cys-241/Cys-291 and Cys-259/Cys-279. N-linked (GlcNAc...) asparagine glycosylation is found at Asn-281 and Asn-409. Cystine bridges form between Cys-464–Cys-557, Cys-589–Cys-769, Cys-819–Cys-847, Cys-845–Cys-881, Cys-919–Cys-1307, Cys-1075–Cys-1123, and Cys-1338–Cys-1453. The interval 695–726 (SHRSPEYSTAMGAGGGHPEAFESSTPLHQAED) is bait region. A glycan (N-linked (GlcNAc...) asparagine) is linked at Asn-857. The isoglutamyl cysteine thioester (Cys-Gln) cross-link spans 970-973 (CGEQ). N-linked (GlcNAc...) asparagine glycosylation occurs at Asn-1020.

It belongs to the protease inhibitor I39 (alpha-2-macroglobulin) family. As to quaternary structure, monomer. In terms of tissue distribution, in the epidermis, expressed predominantly in the granular layer at the apical edge of keratinocytes (at protein level). Also detected in placenta, testis and thymus but not in epithelia of kidney, lung, small intestine or colon.

The protein resides in the secreted. Its function is as follows. Is able to inhibit all four classes of proteinases by a unique 'trapping' mechanism. This protein has a peptide stretch, called the 'bait region' which contains specific cleavage sites for different proteinases. When a proteinase cleaves the bait region, a conformational change is induced in the protein which traps the proteinase. The entrapped enzyme remains active against low molecular weight substrates (activity against high molecular weight substrates is greatly reduced). Following cleavage in the bait region a thioester bond is hydrolyzed and mediates the covalent binding of the protein to the proteinase. Displays inhibitory activity against chymotrypsin, papain, thermolysin, subtilisin A and, to a lesser extent, elastase but not trypsin. May play an important role during desquamation by inhibiting extracellular proteases. The protein is Alpha-2-macroglobulin-like protein 1 of Homo sapiens (Human).